We begin with the raw amino-acid sequence, 236 residues long: MQKPNIIIKISGASLQDKNSNDCYSYQRINSLADQLKSLAKKYNIGLIVGGGNIFRGKLAKDFGVEINKADYIGMLATVINSTLLESKLQSLGLKTKVLSALEVKGLTNEINPKSLAEVFSDCQIAFFSGGTGNSHFTTDTATVLRAIQINAQLVLIGKDGVDGVYTDDPKKNKKAKFIEQITYQQALNDQLRVMDLTAFSLAKDHNLKLLIFNIEAEQSIIKTIENKNKHTKITN.

9-12 (KISG) serves as a coordination point for ATP. Gly-51 lines the UMP pocket. Residues Gly-52 and Arg-56 each contribute to the ATP site. Residues Asp-71 and 132–139 (TGNSHFTT) each bind UMP. Residues Tyr-166 and Asp-169 each coordinate ATP.

It belongs to the UMP kinase family. As to quaternary structure, homohexamer.

It is found in the cytoplasm. The catalysed reaction is UMP + ATP = UDP + ADP. The protein operates within pyrimidine metabolism; CTP biosynthesis via de novo pathway; UDP from UMP (UMPK route): step 1/1. With respect to regulation, inhibited by UTP. In terms of biological role, catalyzes the reversible phosphorylation of UMP to UDP. This is Uridylate kinase from Mycoplasmoides gallisepticum (strain R(low / passage 15 / clone 2)) (Mycoplasma gallisepticum).